The primary structure comprises 906 residues: MLSILKKLFGTANDRTVKKLFSEITKINSLEPAIQKLSDEELKNKTVEFKEKLKNGATLDDIVYEAFAVVREAARRVCGMRHFDVQLIGGLILHRGMITEMRTGEGKTLVATLPAYLNALTGKGVHVVTVNDYLASRDSASMGKIYNFLGLSVGCIVGGMPDEIKRAAYNADITHATNNELGFDYLRDNMKYSLQERVLRPFNFAIIDEVDSILIDEARTPLVISGPVNDNSELYGKIDKIVRLLNASDFEKDEKLKTINLTETGITHIESLLSKENIIKPDTGLYDFENLTLVHYVNQALRAHNMFTVNVDYLVREGKVMIIDEFTGRVMEGRRYSEGLHQALEAKENVKIQNENQTLASITFQNYFRNYPKLSGMTGTAMTEAPELKDIYNLDVVAVPTHNKVTRLDLDDEIYGSKKEKYDAILKLIKDCYDRGQPILVGTISIEKSEELSSVLNKEKIPHKVLNAKFHEQEAFIIAQAGRFKAVTIATNMAGRGTDIMLGGNPEMLIEQLDKEHNYEAKIAEIKAQIAEEKKQVIEAGGLFVIGTERHESRRIDNQLRGRSGRQGDPGKTKFFLSLDDDLMRIFASDRISGVLRTLGLKDGEAIHHPMISRSLEKAQQKVEGHNYEMRKNLLRFDDVMNDQRKIIYEQRTEIIKSKDSHGFLNSTTEELAKKIVLTFMPVGSYREDWDIENLSVELHRVFSIKFDHNVVSKNDVTEEEITKTVIQMAHDIYKSKEEAYSSELMHNAVKYILLTTLDQVWKDHLYSLDHLRQGISLRAYAQKDPLSEYKREAFNLFEQMLNNLKELFIQTVYHFHIDLKHVQKEDVSLEYKKLQQNMRESREDPAFSKYNAGSSLETDLKPVVSRIDPKDRNPDDPTSWGRVSRNELCPCGSGKKYKYCHGAHE.

ATP contacts are provided by residues glutamine 86, 104 to 108 (GEGKT), and aspartate 499. The segment at 862–885 (KPVVSRIDPKDRNPDDPTSWGRVS) is disordered. Residues cysteine 890, cysteine 892, cysteine 901, and histidine 902 each contribute to the Zn(2+) site.

This sequence belongs to the SecA family. In terms of assembly, monomer and homodimer. Part of the essential Sec protein translocation apparatus which comprises SecA, SecYEG and auxiliary proteins SecDF-YajC and YidC. The cofactor is Zn(2+).

The protein localises to the cell inner membrane. It is found in the cytoplasm. The enzyme catalyses ATP + H2O + cellular proteinSide 1 = ADP + phosphate + cellular proteinSide 2.. Part of the Sec protein translocase complex. Interacts with the SecYEG preprotein conducting channel. Has a central role in coupling the hydrolysis of ATP to the transfer of proteins into and across the cell membrane, serving both as a receptor for the preprotein-SecB complex and as an ATP-driven molecular motor driving the stepwise translocation of polypeptide chains across the membrane. This is Protein translocase subunit SecA from Rickettsia massiliae (strain Mtu5).